The following is a 474-amino-acid chain: Synaptotagmin-17 (474 aa).

The segment at 60–112 (WLMASRSSDKDGDSVHTASEVPLTPRTNSPDGRRSSSDTSKSTYSLTRRISSL) is disordered. Over residues 96 to 112 (SDTSKSTYSLTRRISSL) the composition is skewed to low complexity. Phosphoserine occurs at positions 118 and 119. C2 domains are found at residues 184–310 (QLGM…HWWK) and 321–455 (ELGE…EQWH).

The protein belongs to the synaptotagmin family.

The protein resides in the membrane. Plays a role in dendrite formation by melanocytes. In Pongo abelii (Sumatran orangutan), this protein is Synaptotagmin-17 (SYT17).